A 1403-amino-acid polypeptide reads, in one-letter code: Protein FAM135B (1403 aa).

Disordered regions lie at residues 445-483 (EKNL…EVQE), 514-548 (EDEC…GQTP), 648-669 (REAL…DLSA), and 718-740 (RHAH…LPSG). Basic and acidic residues predominate over residues 649 to 661 (EALDTKPSQPDHA). Residues 731–740 (TESNTSLPSG) are compositionally biased toward polar residues. Phosphoserine is present on residues serine 775 and serine 776. Residues 790-819 (TAGFSEDLDPSSKENSPPRHTSLSYGGSRV) are disordered. A compositionally biased stretch (polar residues) spans 802–814 (KENSPPRHTSLSY).

Belongs to the FAM135 family.

The chain is Protein FAM135B (Fam135b) from Mus musculus (Mouse).